The primary structure comprises 146 residues: Large ribosomal subunit protein uL15 (146 aa).

Residues 1–13 (MKLHELKPAEGSR) show a composition bias toward basic and acidic residues. The disordered stretch occupies residues 1–57 (MKLHELKPAEGSRKVRNRVGRGTSSGNGKTSGRGQKGQKARSGVGLRPGFEGGQTPL). Over residues 23 to 35 (TSSGNGKTSGRGQ) the composition is skewed to gly residues.

The protein belongs to the universal ribosomal protein uL15 family. In terms of assembly, part of the 50S ribosomal subunit.

In terms of biological role, binds to the 23S rRNA. This Streptococcus thermophilus (strain ATCC BAA-491 / LMD-9) protein is Large ribosomal subunit protein uL15.